The sequence spans 81 residues: UPF0180 protein ABC2430 (81 aa).

The protein belongs to the UPF0180 family.

This Shouchella clausii (strain KSM-K16) (Alkalihalobacillus clausii) protein is UPF0180 protein ABC2430.